A 601-amino-acid polypeptide reads, in one-letter code: Polypeptide N-acetylgalactosaminyltransferase 11 (601 aa).

Residues 1 to 7 are Cytoplasmic-facing; it reads MGSAALR. Residues 8–28 traverse the membrane as a helical; Signal-anchor for type II membrane protein segment; it reads CFCYGCLFTSVTWTLLLFIYF. Residues Asn29 and Asn202 are each glycosylated (N-linked (GlcNAc...) asparagine). Residues 29–601 lie on the Lumenal side of the membrane; that stretch reads NFSEESQGFR…SPSQQWHLEN (573 aa). The catalytic subdomain A stretch occupies residues 143–254; sequence LPMASIVICF…EMWLQPLLAP (112 aa). Residues 312–374 are catalytic subdomain B; that stretch reads PFRSPTMAGG…PCSRVGHIFR (63 aa). Residues 469–600 form the Ricin B-type lectin domain; sequence RPKILQRGRL…GSPSQQWHLE (132 aa). Cys486 and Cys505 are joined by a disulfide. Asn508 carries N-linked (GlcNAc...) asparagine glycosylation. Disulfide bonds link Cys529–Cys546 and Cys571–Cys589.

This sequence belongs to the glycosyltransferase 2 family. GalNAc-T subfamily. Interacts with notch1. Requires Mn(2+) as cofactor. Ca(2+) serves as cofactor.

It localises to the golgi apparatus membrane. The enzyme catalyses L-seryl-[protein] + UDP-N-acetyl-alpha-D-galactosamine = a 3-O-[N-acetyl-alpha-D-galactosaminyl]-L-seryl-[protein] + UDP + H(+). It catalyses the reaction L-threonyl-[protein] + UDP-N-acetyl-alpha-D-galactosamine = a 3-O-[N-acetyl-alpha-D-galactosaminyl]-L-threonyl-[protein] + UDP + H(+). The protein operates within protein modification; protein glycosylation. Its function is as follows. Polypeptide N-acetylgalactosaminyltransferase that catalyzes the initiation of protein O-linked glycosylation and is involved in left/right asymmetry by mediating O-glycosylation of NOTCH1. O-glycosylation of NOTCH1 promotes activation of NOTCH1, modulating the balance between motile and immotile (sensory) cilia at the left-right organiser (LRO). Polypeptide N-acetylgalactosaminyltransferases catalyze the transfer of an N-acetyl-D-galactosamine residue to a serine or threonine residue on the protein receptor. This Xenopus tropicalis (Western clawed frog) protein is Polypeptide N-acetylgalactosaminyltransferase 11 (galnt11).